The chain runs to 298 residues: DDRGK domain-containing protein 1 (298 aa).

The Lumenal segment spans residues 1–2 (ME). A helical membrane pass occupies residues 3–23 (EIFALIVSMILIVAVIPLFFW). Residues 24–298 (KRRRDARSRE…ISGMEEISVS (275 aa)) lie on the Cytoplasmic side of the membrane. The disordered stretch occupies residues 31-155 (SREEVAEPPQ…EEEKARQAKE (125 aa)). Residues 101-155 (KRQEREAQRQAEEATRESRNTKQDWYAEMRRKKDEEREAEELKLEEEEKARQAKE) are compositionally biased toward basic and acidic residues.

It belongs to the DDRGK1 family.

The protein localises to the endoplasmic reticulum membrane. Its function is as follows. Substrate adapter for ufmylation, the covalent attachment of the ubiquitin-like modifier UFM1 to substrate proteins. The chain is DDRGK domain-containing protein 1 from Arabidopsis thaliana (Mouse-ear cress).